The primary structure comprises 124 residues: MKPGAIQVAKGIITINEGRKTLEVSVTNNGTRSVQVGSHFHFAEANGALSFNRDKAIGMRLDIPSGTSVRFEPGEEKTVTLVEIGGRKTVRGLNGMADTYMDERGKEKTLSNLKKAGWMEEAIR.

The protein belongs to the urease beta subunit family. Heterotrimer of UreA (gamma), UreB (beta) and UreC (alpha) subunits. Three heterotrimers associate to form the active enzyme.

The protein localises to the cytoplasm. The enzyme catalyses urea + 2 H2O + H(+) = hydrogencarbonate + 2 NH4(+). Its pathway is nitrogen metabolism; urea degradation; CO(2) and NH(3) from urea (urease route): step 1/1. The polypeptide is Urease subunit beta (Bacillus velezensis (strain DSM 23117 / BGSC 10A6 / LMG 26770 / FZB42) (Bacillus amyloliquefaciens subsp. plantarum)).